The primary structure comprises 230 residues: Bidirectional sugar transporter SWEET2b (230 aa).

At 1–6 (MDSLYD) the chain is on the extracellular side. Residues 7–27 (ISCFAAGLAGNIFALALFLSP) traverse the membrane as a helical segment. The 86-residue stretch at 13-98 (GLAGNIFALA…CLFIFYADSR (86 aa)) folds into the MtN3/slv 1 domain. Topologically, residues 28-45 (VTTFKRILKAKSTERFDG) are cytoplasmic. Residues 46 to 66 (LPYLFSLLNCLICLWYGLPWV) form a helical membrane-spanning segment. The Extracellular portion of the chain corresponds to 67–72 (ADGRLL). A helical transmembrane segment spans residues 73 to 93 (VATVNGIGAVFQLAYICLFIF). Over 94–103 (YADSRKTRMK) the chain is Cytoplasmic. The chain crosses the membrane as a helical span at residues 104–124 (IIGLLVLVVCGFALVSHASVF). Residues 125–137 (FFDQPLRQQFVGA) lie on the Extracellular side of the membrane. The region spanning 133 to 217 (QFVGAVSMAS…LALYAYYSRK (85 aa)) is the MtN3/slv 2 domain. The helical transmembrane segment at 138–158 (VSMASLISMFASPLAVMGVVI) threads the bilayer. Residues 159-167 (RSESVEFMP) are Cytoplasmic-facing. Residues 168–188 (FYLSLSTFLMSASFALYGLLL) traverse the membrane as a helical segment. The Extracellular segment spans residues 189-190 (RD). A helical membrane pass occupies residues 191-211 (FFIYFPNGLGLILGAMQLALY). The Cytoplasmic portion of the chain corresponds to 212-230 (AYYSRKWRGQDSSAPLLLA).

This sequence belongs to the SWEET sugar transporter family. In terms of assembly, forms homooligomers and/or heterooligomers.

The protein resides in the cell membrane. Its function is as follows. Mediates both low-affinity uptake and efflux of sugar across the plasma membrane. In Oryza sativa subsp. indica (Rice), this protein is Bidirectional sugar transporter SWEET2b (SWEET2B).